Here is a 475-residue protein sequence, read N- to C-terminus: Argininosuccinate lyase (475 aa).

Belongs to the lyase 1 family. Argininosuccinate lyase subfamily.

Its subcellular location is the cytoplasm. The enzyme catalyses 2-(N(omega)-L-arginino)succinate = fumarate + L-arginine. The protein operates within amino-acid biosynthesis; L-arginine biosynthesis; L-arginine from L-ornithine and carbamoyl phosphate: step 3/3. This chain is Argininosuccinate lyase, found in Streptomyces coelicolor (strain ATCC BAA-471 / A3(2) / M145).